The sequence spans 748 residues: Basic juvenile hormone-suppressible protein 1 (748 aa).

Residues M1–V17 form the signal peptide.

The protein belongs to the hemocyanin family. As to expression, fat body, and hemolymph of larvae.

The chain is Basic juvenile hormone-suppressible protein 1 (BJSP-1) from Trichoplusia ni (Cabbage looper).